The following is a 725-amino-acid chain: Phosphoribosylformylglycinamidine synthase subunit PurL (725 aa).

The active site involves H41. 2 residues coordinate ATP: Y44 and K83. E85 contributes to the Mg(2+) binding site. Substrate contacts are provided by residues 86-89 (SHNH) and R108. H87 acts as the Proton acceptor in catalysis. D109 contributes to the Mg(2+) binding site. Q231 serves as a coordination point for substrate. D259 provides a ligand contact to Mg(2+). 303–305 (ESQ) serves as a coordination point for substrate. 2 residues coordinate ATP: D485 and G522. Mg(2+) is bound at residue N523. Position 525 (S525) interacts with substrate.

The protein belongs to the FGAMS family. As to quaternary structure, monomer. Part of the FGAM synthase complex composed of 1 PurL, 1 PurQ and 2 PurS subunits.

Its subcellular location is the cytoplasm. It carries out the reaction N(2)-formyl-N(1)-(5-phospho-beta-D-ribosyl)glycinamide + L-glutamine + ATP + H2O = 2-formamido-N(1)-(5-O-phospho-beta-D-ribosyl)acetamidine + L-glutamate + ADP + phosphate + H(+). Its pathway is purine metabolism; IMP biosynthesis via de novo pathway; 5-amino-1-(5-phospho-D-ribosyl)imidazole from N(2)-formyl-N(1)-(5-phospho-D-ribosyl)glycinamide: step 1/2. Its function is as follows. Part of the phosphoribosylformylglycinamidine synthase complex involved in the purines biosynthetic pathway. Catalyzes the ATP-dependent conversion of formylglycinamide ribonucleotide (FGAR) and glutamine to yield formylglycinamidine ribonucleotide (FGAM) and glutamate. The FGAM synthase complex is composed of three subunits. PurQ produces an ammonia molecule by converting glutamine to glutamate. PurL transfers the ammonia molecule to FGAR to form FGAM in an ATP-dependent manner. PurS interacts with PurQ and PurL and is thought to assist in the transfer of the ammonia molecule from PurQ to PurL. The polypeptide is Phosphoribosylformylglycinamidine synthase subunit PurL (Thermus thermophilus (strain ATCC BAA-163 / DSM 7039 / HB27)).